Here is a 149-residue protein sequence, read N- to C-terminus: Transcriptional repressor NrdR (149 aa).

The segment at 3-34 is a zinc-finger region; it reads CPFCSENDTKVIDSRLVADGHQVRRRRQCLAC. Residues 49 to 139 enclose the ATP-cone domain; that stretch reads PKVIKSNGNR…VYRSFEDIRE (91 aa).

This sequence belongs to the NrdR family. Requires Zn(2+) as cofactor.

Negatively regulates transcription of bacterial ribonucleotide reductase nrd genes and operons by binding to NrdR-boxes. This chain is Transcriptional repressor NrdR, found in Vibrio vulnificus (strain YJ016).